The chain runs to 552 residues: Urocanate hydratase (552 aa).

NAD(+)-binding positions include glycine 48–glycine 49, glutamine 126, glycine 172–glycine 174, aspartate 192, asparagine 238–alanine 239, glutamine 259–histidine 263, tyrosine 268–leucine 269, and tyrosine 317. Cysteine 405 is a catalytic residue. Glycine 487 serves as a coordination point for NAD(+).

The protein belongs to the urocanase family. The cofactor is NAD(+).

The protein resides in the cytoplasm. It catalyses the reaction 4-imidazolone-5-propanoate = trans-urocanate + H2O. It participates in amino-acid degradation; L-histidine degradation into L-glutamate; N-formimidoyl-L-glutamate from L-histidine: step 2/3. Catalyzes the conversion of urocanate to 4-imidazolone-5-propionate. The protein is Urocanate hydratase of Streptomyces griseus subsp. griseus (strain JCM 4626 / CBS 651.72 / NBRC 13350 / KCC S-0626 / ISP 5235).